The following is a 302-amino-acid chain: Taste receptor type 2 member 104 (302 aa).

The Extracellular portion of the chain corresponds to 1–7; it reads MLSALES. A helical membrane pass occupies residues 8–28; it reads ILLSVATSEAMLGVLGNTFIV. The Cytoplasmic portion of the chain corresponds to 29-43; that stretch reads LVNYTDWVRNKKLSK. A helical membrane pass occupies residues 44 to 64; sequence INFILTGLAISRIFTIWIITL. Residues 65-87 lie on the Extracellular side of the membrane; the sequence is DAYTKVFLLTMLMPSSLHECMSY. The helical transmembrane segment at 88–108 threads the bilayer; that stretch reads IWVIINHLSVWFSTSLGIFYF. Residues 109-128 are Cytoplasmic-facing; sequence LKIANFSHYIFLWMKRRADK. The helical transmembrane segment at 129-149 threads the bilayer; the sequence is VFVFLIVFLIITWLASFPLAV. Residues 150–182 lie on the Extracellular side of the membrane; the sequence is KVIKDVKIYQSNTSWLIHLEKSELLINYVFANM. Residue N161 is glycosylated (N-linked (GlcNAc...) asparagine). Residues 183–203 traverse the membrane as a helical segment; the sequence is GPISLFIVAIIACFLLTISLW. Residues 204-229 lie on the Cytoplasmic side of the membrane; that stretch reads RHSRQMQSIGSGFRDLNTEAHMKAMK. The helical transmembrane segment at 230-250 threads the bilayer; the sequence is VLIAFIILFILYFLGILIETL. The Extracellular portion of the chain corresponds to 251–259; sequence CLFLTNNKL. A helical transmembrane segment spans residues 260-280; it reads LFIFGFTLSAMYPCCHSFILI. The Cytoplasmic segment spans residues 281–302; the sequence is LTSRELKQATMRALQRLKCCET.

It belongs to the G-protein coupled receptor T2R family.

It localises to the membrane. Putative taste receptor which may play a role in the perception of bitterness. This is Taste receptor type 2 member 104 from Mus musculus (Mouse).